Reading from the N-terminus, the 442-residue chain is D-inositol 3-phosphate glycosyltransferase (442 aa).

Residue His-26 participates in 1D-myo-inositol 3-phosphate binding. Residues 32–33 (QP) and Gly-40 each bind UDP-N-acetyl-alpha-D-glucosamine. Residues 37–42 (DAGGMN), Lys-95, Tyr-128, Thr-152, and Arg-172 contribute to the 1D-myo-inositol 3-phosphate site. Residues Arg-246, Lys-251, and Gln-304 each contribute to the UDP-N-acetyl-alpha-D-glucosamine site. Mg(2+) contacts are provided by Tyr-313, Arg-314, and Ala-316. UDP-N-acetyl-alpha-D-glucosamine-binding residues include Glu-326 and Glu-334. Position 340 (Thr-340) interacts with Mg(2+).

It belongs to the glycosyltransferase group 1 family. MshA subfamily. In terms of assembly, homodimer.

The enzyme catalyses 1D-myo-inositol 3-phosphate + UDP-N-acetyl-alpha-D-glucosamine = 1D-myo-inositol 2-acetamido-2-deoxy-alpha-D-glucopyranoside 3-phosphate + UDP + H(+). Functionally, catalyzes the transfer of a N-acetyl-glucosamine moiety to 1D-myo-inositol 3-phosphate to produce 1D-myo-inositol 2-acetamido-2-deoxy-glucopyranoside 3-phosphate in the mycothiol biosynthesis pathway. The sequence is that of D-inositol 3-phosphate glycosyltransferase from Mycolicibacterium gilvum (strain PYR-GCK) (Mycobacterium gilvum (strain PYR-GCK)).